The chain runs to 429 residues: SET domain-containing protein 14 (429 aa).

8 residues coordinate Zn(2+): Cys26, Cys29, Cys39, Cys42, Cys48, Cys52, His60, and Cys64. Residues Cys26 to Cys64 form an MYND-type zinc finger.

Its subcellular location is the nucleus. This Caenorhabditis elegans protein is SET domain-containing protein 14 (set-14).